Reading from the N-terminus, the 288-residue chain is Cyclin-dependent kinase 2 homolog (288 aa).

The Protein kinase domain maps to 4-284; the sequence is YHGLEKIGEG…AKQAIEHPYF (281 aa). ATP-binding positions include 10 to 18 and Lys32; that span reads IGEGTYGVV. Thr14 bears the Phosphothreonine mark. Residue Tyr15 is modified to Phosphotyrosine. Asp125 functions as the Proton acceptor in the catalytic mechanism. Thr158 carries the post-translational modification Phosphothreonine.

This sequence belongs to the protein kinase superfamily. CMGC Ser/Thr protein kinase family. CDC2/CDKX subfamily. May form a complex composed of at least the catalytic subunit CRK2 and a cyclin. It depends on Mg(2+) as a cofactor.

It localises to the cytoplasm. The catalysed reaction is L-seryl-[protein] + ATP = O-phospho-L-seryl-[protein] + ADP + H(+). The enzyme catalyses L-threonyl-[protein] + ATP = O-phospho-L-threonyl-[protein] + ADP + H(+). It catalyses the reaction [DNA-directed RNA polymerase] + ATP = phospho-[DNA-directed RNA polymerase] + ADP + H(+). Phosphorylation at Thr-14 or Tyr-15 inactivates the enzyme, while phosphorylation at Thr-158 activates it. In terms of biological role, serine/threonine-protein kinase. Involved in the control of the cell cycle. Required for entry into S-phase and mitosis. Probable component of the kinase complex that phosphorylates the repetitive C-terminus of RNA polymerase II. The polypeptide is Cyclin-dependent kinase 2 homolog (Plasmodium chabaudi chabaudi).